Reading from the N-terminus, the 374-residue chain is tRNA-specific 2-thiouridylase MnmA (374 aa).

ATP is bound by residues Gly-17 to Ser-24 and Met-43. The interval Asn-103–Asp-105 is interaction with target base in tRNA. Cys-108 (nucleophile) is an active-site residue. A disulfide bridge links Cys-108 with Cys-204. An ATP-binding site is contributed by Gly-132. Residues Lys-154 to Gln-156 are interaction with tRNA. Cys-204 (cysteine persulfide intermediate) is an active-site residue. The interval Arg-316–Tyr-317 is interaction with tRNA.

Belongs to the MnmA/TRMU family.

The protein localises to the cytoplasm. It carries out the reaction S-sulfanyl-L-cysteinyl-[protein] + uridine(34) in tRNA + AH2 + ATP = 2-thiouridine(34) in tRNA + L-cysteinyl-[protein] + A + AMP + diphosphate + H(+). Functionally, catalyzes the 2-thiolation of uridine at the wobble position (U34) of tRNA, leading to the formation of s(2)U34. In Pseudomonas putida (strain GB-1), this protein is tRNA-specific 2-thiouridylase MnmA.